The chain runs to 201 residues: dITP/XTP pyrophosphatase (201 aa).

A substrate-binding site is contributed by 9 to 14 (SNNAGK). The Mg(2+) site is built by Glu41 and Asp70. Asp70 serves as the catalytic Proton acceptor. Substrate-binding positions include Ser71, 155-158 (FGYD), Lys178, and 183-184 (HR).

The protein belongs to the HAM1 NTPase family. Homodimer. Mg(2+) serves as cofactor.

The enzyme catalyses XTP + H2O = XMP + diphosphate + H(+). It carries out the reaction dITP + H2O = dIMP + diphosphate + H(+). The catalysed reaction is ITP + H2O = IMP + diphosphate + H(+). Pyrophosphatase that catalyzes the hydrolysis of nucleoside triphosphates to their monophosphate derivatives, with a high preference for the non-canonical purine nucleotides XTP (xanthosine triphosphate), dITP (deoxyinosine triphosphate) and ITP. Seems to function as a house-cleaning enzyme that removes non-canonical purine nucleotides from the nucleotide pool, thus preventing their incorporation into DNA/RNA and avoiding chromosomal lesions. This is dITP/XTP pyrophosphatase from Methylococcus capsulatus (strain ATCC 33009 / NCIMB 11132 / Bath).